The chain runs to 317 residues: Pantothenate kinase (317 aa).

ATP is bound at residue 99 to 106; the sequence is GSVSVGKS.

It belongs to the prokaryotic pantothenate kinase family.

Its subcellular location is the cytoplasm. It catalyses the reaction (R)-pantothenate + ATP = (R)-4'-phosphopantothenate + ADP + H(+). Its pathway is cofactor biosynthesis; coenzyme A biosynthesis; CoA from (R)-pantothenate: step 1/5. The polypeptide is Pantothenate kinase (Histophilus somni (strain 129Pt) (Haemophilus somnus)).